Consider the following 469-residue polypeptide: MSTQLQTWDFLPISMNLQGRECLVVGDTEQAVRKTDLLLRAGAKVRLLGDPHAKALKESADALNAITVIPDPFHPDLLQLCAVVVAASDSAMLNQQVAQAAQARGIPVNVVEQPELSSFIFPSIIDRHPVLVSVTSSGGAPVLTRLLRNRLESLIPHGFGRLADLAMEFRDKVRSRFGHINQRRRFWESVLEGVVSDLVFCGRTDKARAMLDDMLSGEQADAIKDTGEVYLVGAGPGDPDLLTFRALRLMRQADVVLYDRLVSPQILDLVRRDAKRINVGKARSNHTLPQQEINAMLVELAKEGKRVLRLKGGDPFIFGRGGEEIDQLADAGVPFQVVPGITAASGCAAYSGIPLTHRDHSQSVRFVTGHLKSDTCDLPWHEFVQDNQTLVFYMGLVGLPIISRELIAHGMKPSTPIALVSRGTLPDQQVLVGELGNIAKKVEEQQIPGPTIIIIGDVVTLRDRLRWMD.

A precorrin-2 dehydrogenase /sirohydrochlorin ferrochelatase region spans residues 1–211 (MSTQLQTWDF…GRTDKARAML (211 aa)). Residues 29-30 (EQ) and 50-51 (DP) contribute to the NAD(+) site. Phosphoserine is present on Ser136. Residues 227–469 (GEVYLVGAGP…TLRDRLRWMD (243 aa)) are uroporphyrinogen-III C-methyltransferase. Position 236 (Pro236) interacts with S-adenosyl-L-methionine. Asp259 functions as the Proton acceptor in the catalytic mechanism. Lys281 functions as the Proton donor in the catalytic mechanism. S-adenosyl-L-methionine is bound by residues 312–314 (GGD), Ile317, 342–343 (TA), Met394, and Gly423.

It in the N-terminal section; belongs to the precorrin-2 dehydrogenase / sirohydrochlorin ferrochelatase family. In the C-terminal section; belongs to the precorrin methyltransferase family.

The catalysed reaction is uroporphyrinogen III + 2 S-adenosyl-L-methionine = precorrin-2 + 2 S-adenosyl-L-homocysteine + H(+). The enzyme catalyses precorrin-2 + NAD(+) = sirohydrochlorin + NADH + 2 H(+). It catalyses the reaction siroheme + 2 H(+) = sirohydrochlorin + Fe(2+). Its pathway is cofactor biosynthesis; adenosylcobalamin biosynthesis; precorrin-2 from uroporphyrinogen III: step 1/1. The protein operates within cofactor biosynthesis; adenosylcobalamin biosynthesis; sirohydrochlorin from precorrin-2: step 1/1. It participates in porphyrin-containing compound metabolism; siroheme biosynthesis; precorrin-2 from uroporphyrinogen III: step 1/1. It functions in the pathway porphyrin-containing compound metabolism; siroheme biosynthesis; siroheme from sirohydrochlorin: step 1/1. Its pathway is porphyrin-containing compound metabolism; siroheme biosynthesis; sirohydrochlorin from precorrin-2: step 1/1. Functionally, multifunctional enzyme that catalyzes the SAM-dependent methylations of uroporphyrinogen III at position C-2 and C-7 to form precorrin-2 via precorrin-1. Then it catalyzes the NAD-dependent ring dehydrogenation of precorrin-2 to yield sirohydrochlorin. Finally, it catalyzes the ferrochelation of sirohydrochlorin to yield siroheme. The chain is Siroheme synthase from Hahella chejuensis (strain KCTC 2396).